An 89-amino-acid chain; its full sequence is cAMP-regulated phosphoprotein 21 (89 aa).

Residues 1 to 89 form a disordered region; it reads MSEPGDLSQT…GGESLQDQTL (89 aa). The residue at position 2 (S2) is an N-acetylserine. 2 positions are modified to phosphoserine: S33 and S56.

In terms of assembly, interacts with CALM1. In terms of processing, phosphorylation at Ser-56 favors interaction with CALM1.

It is found in the cytoplasm. Its function is as follows. May act as a competitive inhibitor of calmodulin-dependent enzymes such as calcineurin in neurons. In Bos taurus (Bovine), this protein is cAMP-regulated phosphoprotein 21 (ARPP21).